Here is a 217-residue protein sequence, read N- to C-terminus: Cytidylate kinase (217 aa).

Residue 10–18 coordinates ATP; that stretch reads GPAGAGKST.

It belongs to the cytidylate kinase family. Type 1 subfamily.

Its subcellular location is the cytoplasm. The catalysed reaction is CMP + ATP = CDP + ADP. It catalyses the reaction dCMP + ATP = dCDP + ADP. The polypeptide is Cytidylate kinase (Clostridium botulinum (strain Langeland / NCTC 10281 / Type F)).